The following is a 516-amino-acid chain: DNA topoisomerase large subunit (516 aa).

128–136 contacts ATP; the sequence is VTGGMNGVG. A DNA-binding region spans residues 369-400; that stretch reads AALARKLAAEKAAETKAAKKASKAKVHKHIKA.

This sequence belongs to the type II topoisomerase family. In terms of assembly, part of the DNA topoisomerase complex made of gp39, gp52 and gp60. The cofactor is Mg(2+).

It carries out the reaction ATP-dependent breakage, passage and rejoining of double-stranded DNA.. Its function is as follows. Large subunit of the DNA topoisomerase that untwists superhelical DNA. Controls of topological states of double-stranded DNA by transient breakage and subsequent rejoining of DNA strands. This Escherichia coli (Bacteriophage T4) protein is DNA topoisomerase large subunit (39).